Reading from the N-terminus, the 235-residue chain is Phosphoribosylaminoimidazole-succinocarboxamide synthase (235 aa).

This sequence belongs to the SAICAR synthetase family.

The catalysed reaction is 5-amino-1-(5-phospho-D-ribosyl)imidazole-4-carboxylate + L-aspartate + ATP = (2S)-2-[5-amino-1-(5-phospho-beta-D-ribosyl)imidazole-4-carboxamido]succinate + ADP + phosphate + 2 H(+). The protein operates within purine metabolism; IMP biosynthesis via de novo pathway; 5-amino-1-(5-phospho-D-ribosyl)imidazole-4-carboxamide from 5-amino-1-(5-phospho-D-ribosyl)imidazole-4-carboxylate: step 1/2. The polypeptide is Phosphoribosylaminoimidazole-succinocarboxamide synthase (Nautilia profundicola (strain ATCC BAA-1463 / DSM 18972 / AmH)).